The primary structure comprises 1380 residues: DNA-directed RNA polymerase subunit beta (1380 aa).

It belongs to the RNA polymerase beta chain family. The RNAP catalytic core consists of 2 alpha, 1 beta, 1 beta' and 1 omega subunit. When a sigma factor is associated with the core the holoenzyme is formed, which can initiate transcription.

It catalyses the reaction RNA(n) + a ribonucleoside 5'-triphosphate = RNA(n+1) + diphosphate. Its function is as follows. DNA-dependent RNA polymerase catalyzes the transcription of DNA into RNA using the four ribonucleoside triphosphates as substrates. The chain is DNA-directed RNA polymerase subunit beta from Rhizobium rhizogenes (strain K84 / ATCC BAA-868) (Agrobacterium radiobacter).